Here is an 856-residue protein sequence, read N- to C-terminus: Dual specificity protein kinase TTK (856 aa).

At Met1 the chain carries N-acetylmethionine. Thr32 carries the post-translational modification Phosphothreonine. Ser36, Ser277, and Ser342 each carry phosphoserine. Residue Thr380 is modified to Phosphothreonine. Residues Ser383, Ser435, and Ser454 each carry the phosphoserine modification. Residues 524-790 (YSILKQIGSG…IPELLTHPYV (267 aa)) enclose the Protein kinase domain. ATP is bound by residues 530–538 (IGSGGSSKV) and Lys552. The active-site Proton acceptor is the Asp646. Ser820 bears the Phosphoserine mark. Positions 837–856 (CGEGQDSSSSKTFDKKRERK) are disordered.

The protein belongs to the protein kinase superfamily. Ser/Thr protein kinase family. Interacts with TPR; the interactions occurs in a microtubule-independent manner. Interacts with MAD1L1 and MAD2L1. In terms of processing, autophosphorylated. As to expression, present in rapidly proliferating cell lines; high levels in testis, bone marrow, spleen and thymus. Low levels in brain, heart, lung and kidney.

The catalysed reaction is L-seryl-[protein] + ATP = O-phospho-L-seryl-[protein] + ADP + H(+). The enzyme catalyses L-threonyl-[protein] + ATP = O-phospho-L-threonyl-[protein] + ADP + H(+). It carries out the reaction L-tyrosyl-[protein] + ATP = O-phospho-L-tyrosyl-[protein] + ADP + H(+). Inhibited by the ATP-competitive kinase inhibitor, SP600125. Its function is as follows. Involved in mitotic spindle assembly checkpoint signaling, a process that delays anaphase until chromosomes are bioriented on the spindle, and in the repair of incorrect mitotic kinetochore-spindle microtubule attachments. Phosphorylates MAD1L1 to promote the mitotic spindle assembly checkpoint. Phosphorylates CDCA8/Borealin leading to enhanced AURKB activity at the kinetochore. Phosphorylates SKA3 at 'Ser-34' leading to dissociation of the SKA complex from microtubules and destabilization of microtubule-kinetochore attachments. Phosphorylates KNL1, KNTC1 and autophosphorylates. Phosphorylates MCRS1 which enhances recruitment of KIF2A to the minus end of spindle microtubules and promotes chromosome alignment. The polypeptide is Dual specificity protein kinase TTK (Ttk) (Mus musculus (Mouse)).